The primary structure comprises 296 residues: Acetylglutamate kinase (296 aa).

Substrate-binding positions include 69 to 70 (GG), Arg-91, and Asn-193.

The protein belongs to the acetylglutamate kinase family. ArgB subfamily.

Its subcellular location is the cytoplasm. The enzyme catalyses N-acetyl-L-glutamate + ATP = N-acetyl-L-glutamyl 5-phosphate + ADP. It participates in amino-acid biosynthesis; L-arginine biosynthesis; N(2)-acetyl-L-ornithine from L-glutamate: step 2/4. Catalyzes the ATP-dependent phosphorylation of N-acetyl-L-glutamate. The polypeptide is Acetylglutamate kinase (Verminephrobacter eiseniae (strain EF01-2)).